Consider the following 303-residue polypeptide: AP2-like ethylene-responsive transcription factor At1g79700 (303 aa).

The segment covering 1–10 (MAKVSGRSKK) has biased composition (basic residues). The disordered stretch occupies residues 1–55 (MAKVSGRSKKTIVDDEISDKTASASESASIALTSKRKRKSPPRNAPLQRSSPYRG). Polar residues predominate over residues 20–32 (KTASASESASIAL). 2 DNA-binding regions (AP2/ERF) span residues 52–118 (PYRG…LNFP) and 154–202 (KYRG…TNFD). A disordered region spans residues 212–259 (AADKADSDSKPIRSPSREPESSDDNKSPKSEEVIEPSTSPEVIPTRRS). Over residues 214–243 (DKADSDSKPIRSPSREPESSDDNKSPKSEE) the composition is skewed to basic and acidic residues.

Belongs to the AP2/ERF transcription factor family. AP2 subfamily.

It localises to the nucleus. Probably acts as a transcriptional activator. Binds to the GCC-box pathogenesis-related promoter element. May be involved in the regulation of gene expression by stress factors and by components of stress signal transduction pathways. This is AP2-like ethylene-responsive transcription factor At1g79700 from Arabidopsis thaliana (Mouse-ear cress).